Here is a 119-residue protein sequence, read N- to C-terminus: Ribonuclease P protein component (119 aa).

It belongs to the RnpA family. In terms of assembly, consists of a catalytic RNA component (M1 or rnpB) and a protein subunit.

It catalyses the reaction Endonucleolytic cleavage of RNA, removing 5'-extranucleotides from tRNA precursor.. Its function is as follows. RNaseP catalyzes the removal of the 5'-leader sequence from pre-tRNA to produce the mature 5'-terminus. It can also cleave other RNA substrates such as 4.5S RNA. The protein component plays an auxiliary but essential role in vivo by binding to the 5'-leader sequence and broadening the substrate specificity of the ribozyme. The chain is Ribonuclease P protein component from Listeria innocua serovar 6a (strain ATCC BAA-680 / CLIP 11262).